A 999-amino-acid polypeptide reads, in one-letter code: Probable basic-leucine zipper transcription factor N (999 aa).

2 stretches are compositionally biased toward low complexity: residues 1 to 79 and 88 to 126; these read MYQS…YQQQ and NNVNINNNNNNNVNINSQNNVNNNNNNNNNNNNGNINNN. Residues 1 to 126 form a disordered region; the sequence is MYQSIPQQGN…NNNNGNINNN (126 aa). Coiled coils occupy residues 148-198 and 232-282; these read QQQQ…MVLM and GIQQ…QQIS. The span at 286–302 shows a compositional bias: polar residues; sequence ESASPYYSTPIQSNTML. Disordered regions lie at residues 286–406, 450–533, and 601–620; these read ESAS…SQDQ, QQLH…PTIN, and EKQKTRRRASQNLASRNYRQ. A compositionally biased stretch (low complexity) spans 303 to 347; that stretch reads SIPSSPGIPSSIPQLNNSNNINNNSNNNNNNNNNNNNNNINYNSN. Residues 348–406 are compositionally biased toward polar residues; that stretch reads MASNFISQHSNNGSNTSSPVPQTTYLQNSGGNFNAYNGSNTNSPITPSSYLQPTTSQDQ. Residues 423 to 451 are a coiled coil; that stretch reads IQQQQKILQQQQQQQLLLQQQIQQQQQQQ. A compositionally biased stretch (low complexity) spans 450–517; it reads QQLHQPQSPQ…IIQPTTIQPQ (68 aa). The 64-residue stretch at 601-664 folds into the bZIP domain; it reads EKQKTRRRAS…KKLLHENNIL (64 aa). The segment at 602 to 632 is basic motif; sequence KQKTRRRASQNLASRNYRQRKKQYVNEVEDR. Positions 636–643 are leucine-zipper; sequence IVQENERL. Disordered stretches follow at residues 665-711, 779-807, and 870-899; these read KSGG…VVET, QSCPFEDPSEKQHSDPNSSPIGDMPSPYE, and VNNGGNTKSKKTAASTSTTTTTTSTSTTTT. Acidic residues predominate over residues 682–692; the sequence is SEDEDEDDFDQ. A coiled-coil region spans residues 921–950; the sequence is HLVQLSGLLDKLKENIDHENETLIQTYEKL.

Belongs to the bZIP family.

The protein localises to the nucleus. Functionally, probable transcriptional regulator. This Dictyostelium discoideum (Social amoeba) protein is Probable basic-leucine zipper transcription factor N (bzpN).